Here is a 493-residue protein sequence, read N- to C-terminus: Cytochrome P450 2E1 (493 aa).

Residue 298 to 303 participates in substrate binding; it reads FAGTET. Cys-437 is a heme binding site.

The protein belongs to the cytochrome P450 family. As to quaternary structure, interacts with chaperones HSP70 and HSP90; this interaction is required for initial targeting to mitochondria. Heme serves as cofactor.

It is found in the endoplasmic reticulum membrane. The protein resides in the microsome membrane. Its subcellular location is the mitochondrion inner membrane. It carries out the reaction an organic molecule + reduced [NADPH--hemoprotein reductase] + O2 = an alcohol + oxidized [NADPH--hemoprotein reductase] + H2O + H(+). The catalysed reaction is (5Z,8Z,11Z)-eicosatrienoate + reduced [NADPH--hemoprotein reductase] + O2 = 19-hydroxy-(5Z,8Z,11Z)-eicosatrienoate + oxidized [NADPH--hemoprotein reductase] + H2O + H(+). It catalyses the reaction (5Z,8Z,11Z,14Z,17Z)-eicosapentaenoate + reduced [NADPH--hemoprotein reductase] + O2 = 19-hydroxy-(5Z,8Z,11Z,14Z,17Z)-eicosapentaenoate + oxidized [NADPH--hemoprotein reductase] + H2O + H(+). The enzyme catalyses (4Z,7Z,10Z,13Z,16Z,19Z)-docosahexaenoate + reduced [NADPH--hemoprotein reductase] + O2 = 21-hydroxy-(4Z,7Z,10Z,13Z,16Z,19Z)-docosahexaenoate + oxidized [NADPH--hemoprotein reductase] + H2O + H(+). It carries out the reaction dodecanoate + reduced [NADPH--hemoprotein reductase] + O2 = 11-hydroxydodecanoate + oxidized [NADPH--hemoprotein reductase] + H2O + H(+). The catalysed reaction is tetradecanoate + reduced [NADPH--hemoprotein reductase] + O2 = 13-hydroxytetradecanoate + oxidized [NADPH--hemoprotein reductase] + H2O + H(+). It catalyses the reaction 4-nitrophenol + NADPH + O2 + H(+) = 4-nitrocatechol + NADP(+) + H2O. It functions in the pathway lipid metabolism; fatty acid metabolism. With respect to regulation, the omega-1 hydroxylase activity is stimulated by cytochrome b5. In terms of biological role, a cytochrome P450 monooxygenase involved in the metabolism of fatty acids. Mechanistically, uses molecular oxygen inserting one oxygen atom into a substrate, and reducing the second into a water molecule, with two electrons provided by NADPH via cytochrome P450 reductase (NADPH--hemoprotein reductase). Catalyzes the hydroxylation of carbon-hydrogen bonds. Hydroxylates fatty acids specifically at the omega-1 position displaying the highest catalytic activity for saturated fatty acids. May be involved in the oxidative metabolism of xenobiotics. This chain is Cytochrome P450 2E1, found in Rattus norvegicus (Rat).